A 412-amino-acid chain; its full sequence is UDP-galactose transporter homolog 1 (412 aa).

A helical membrane pass occupies residues 3–23; it reads VLRLAVCISGVYAAFLLWAIA. The interval 31 to 51 is disordered; that stretch reads FPSVHPHPHQQPHSPSDPPPG. The next 4 helical transmembrane spans lie at 58 to 78, 139 to 159, 197 to 217, and 222 to 242; these read LFLNFAQALASSLSALCYLSF, LLALLVQVSVFQTIASPIGFL, YIVVALVTVGISMFMLFAETS, and GGSDSMWGLVLLLVNLLIDGL. Residue asparagine 244 is glycosylated (N-linked (GlcNAc...) asparagine). Helical transmembrane passes span 262–282, 325–345, 355–375, and 379–399; these read MMFTMALTTQIILLPLLVLPL, SALAPLFAYALLGGLGQLFIF, TLVMVTVTRKLFTMLLSVVVF, and LTKGQWLGVGVVFAGIGVEAG.

It belongs to the nucleotide-sugar transporter family. SLC35B subfamily.

Its subcellular location is the endoplasmic reticulum membrane. May be involved in specific transport of UDP-Gal from the cytosol to the Golgi lumen. Involved in the maintenance of optimal conditions for the folding of secretory pathway proteins in the endoplasmic reticulum. The sequence is that of UDP-galactose transporter homolog 1 (HUT1-A) from Cryptococcus neoformans var. neoformans serotype D (strain JEC21 / ATCC MYA-565) (Filobasidiella neoformans).